The chain runs to 561 residues: Malto-oligosyltrehalose trehalohydrolase (561 aa).

Residue 253–258 (RLDAVH) coordinates substrate. Residue Asp255 is the Nucleophile of the active site. The Proton donor role is filled by Glu286. Substrate is bound by residues 311–315 (DDFHH) and 379–384 (HDQVGN).

It belongs to the glycosyl hydrolase 13 family. In terms of assembly, homodimer.

The protein localises to the cytoplasm. The catalysed reaction is hydrolysis of (1-&gt;4)-alpha-D-glucosidic linkage in 4-alpha-D-[(1-&gt;4)-alpha-D-glucanosyl]n trehalose to yield trehalose and (1-&gt;4)-alpha-D-glucan.. Its pathway is glycan biosynthesis; trehalose biosynthesis. This is Malto-oligosyltrehalose trehalohydrolase (treZ) from Saccharolobus solfataricus (strain ATCC 35092 / DSM 1617 / JCM 11322 / P2) (Sulfolobus solfataricus).